The chain runs to 397 residues: Bifunctional arginine demethylase and lysyl-hydroxylase psr-1 (397 aa).

Residues 146-310 (RKTKKLSEDY…LVWPKTVRGR (165 aa)) enclose the JmjC domain. Thr189 provides a ligand contact to substrate. Fe cation is bound by residues His192 and Asp194. Residue Asn202 coordinates 2-oxoglutarate. Position 209 (Lys209) interacts with substrate. Residue His278 participates in Fe cation binding. 2-oxoglutarate is bound at residue Thr290. Positions 334–344 (SCTDTPPQSLN) are enriched in polar residues. The segment at 334-383 (SCTDTPPQSLNDSSSDSSSSSSSSDDSSDSETEEDSGRCGLGNRKRRNDV) is disordered. Positions 345-358 (DSSSDSSSSSSSSD) are enriched in low complexity.

The protein belongs to the JMJD6 family. As to quaternary structure, interacts with ced-5 and ced-12. The cofactor is Fe(2+).

Its subcellular location is the nucleus. Functionally, dioxygenase that can both act as a histone arginine demethylase and a lysyl-hydroxylase. In Caenorhabditis briggsae, this protein is Bifunctional arginine demethylase and lysyl-hydroxylase psr-1 (psr-1).